Here is a 322-residue protein sequence, read N- to C-terminus: o-succinylbenzoate synthase (322 aa).

Catalysis depends on Lys136, which acts as the Proton donor. Residues Asp165, Glu194, and Asp219 each contribute to the Mg(2+) site. Lys243 functions as the Proton acceptor in the catalytic mechanism.

The protein belongs to the mandelate racemase/muconate lactonizing enzyme family. MenC type 1 subfamily. As to quaternary structure, monomer. A divalent metal cation is required as a cofactor.

The enzyme catalyses (1R,6R)-6-hydroxy-2-succinyl-cyclohexa-2,4-diene-1-carboxylate = 2-succinylbenzoate + H2O. It functions in the pathway quinol/quinone metabolism; 1,4-dihydroxy-2-naphthoate biosynthesis; 1,4-dihydroxy-2-naphthoate from chorismate: step 4/7. The protein operates within cofactor biosynthesis; phylloquinone biosynthesis. Converts 2-succinyl-6-hydroxy-2,4-cyclohexadiene-1-carboxylate (SHCHC) to 2-succinylbenzoate (OSB). Does not show N-succinylamino acid racemase (NSAR) activity with N-succinyl-L-phenylglycine as substrate. This chain is o-succinylbenzoate synthase, found in Thermosynechococcus vestitus (strain NIES-2133 / IAM M-273 / BP-1).